A 472-amino-acid polypeptide reads, in one-letter code: F-box protein At3g03040 (472 aa).

Residues 1–49 (MDLLSSLPDEVRCLILSFLTTKESASTSVLSKKWRNLFALVPNLDFDDS) form the F-box domain.

The chain is F-box protein At3g03040 from Arabidopsis thaliana (Mouse-ear cress).